Here is a 193-residue protein sequence, read N- to C-terminus: Probable chemoreceptor glutamine deamidase CheD 1 (193 aa).

The tract at residues 1 to 26 (MPHTPPAYPAASADHRPPSSPPAEPA) is disordered.

Belongs to the CheD family.

The enzyme catalyses L-glutaminyl-[protein] + H2O = L-glutamyl-[protein] + NH4(+). Probably deamidates glutamine residues to glutamate on methyl-accepting chemotaxis receptors (MCPs), playing an important role in chemotaxis. In Chromobacterium violaceum (strain ATCC 12472 / DSM 30191 / JCM 1249 / CCUG 213 / NBRC 12614 / NCIMB 9131 / NCTC 9757 / MK), this protein is Probable chemoreceptor glutamine deamidase CheD 1.